A 271-amino-acid polypeptide reads, in one-letter code: Ubiquitin thioesterase OTUB1 (271 aa).

The residue at position 2 (Ala-2) is an N-acetylalanine. Ser-16 carries the phosphoserine modification. Tyr-26 carries the post-translational modification Phosphotyrosine. In terms of domain architecture, OTU spans 80–271; sequence SYIRKTRPDG…RPGHYDILYK (192 aa). Residue Asp-88 is part of the active site. Cys-91 serves as the catalytic Nucleophile. Ubiquitin-conjugating enzyme E2 binding stretches follow at residues 130 to 138 and 169 to 177; these read FTEFTIEDF and DYLVVYLRL. Positions 189 to 195 are free ubiquitin binding; the sequence is FFEHFIE. The tract at residues 206–213 is ubiquitin-conjugating enzyme E2 binding; the sequence is QEVEPMCK. Free ubiquitin binding regions lie at residues 214–221 and 245–251; these read ESDHIHII and NPHVFPE. Residue His-265 is part of the active site.

It belongs to the peptidase C65 family. As to quaternary structure, interacts with RNF128. Forms a ternary complex with RNF128 and USP8. Interacts with FUS and RACK1. Interacts with UBE2D1/UBCH5A, UBE2W/UBC16 and UBE2N/UBC13. Post-translationally, phosphorylation at Tyr-26 by SRC and SRMS promotes deubiquitination of RPTOR via a non-catalytic process.

It is found in the cytoplasm. The catalysed reaction is Thiol-dependent hydrolysis of ester, thioester, amide, peptide and isopeptide bonds formed by the C-terminal Gly of ubiquitin (a 76-residue protein attached to proteins as an intracellular targeting signal).. Its activity is regulated as follows. By free ubiquitin: binding of free ubiquitin triggers conformational changes in the OTU domain and formation of a ubiquitin-binding helix in the N-terminus, promoting binding of the conjugated donor ubiquitin in UBE2N/UBC13 to OTUB1. Its function is as follows. Hydrolase that can specifically remove compared to 'Lys-48'-linked conjugated ubiquitin from proteins and plays an important regulatory role at the level of protein turnover by preventing degradation. Regulator of T-cell anergy, a phenomenon that occurs when T-cells are rendered unresponsive to antigen rechallenge and no longer respond to their cognate antigen. Acts via its interaction with RNF128/GRAIL. Surprisingly, it regulates RNF128-mediated ubiquitination, but does not deubiquitinate polyubiquitinated RNF128. Deubiquitinates estrogen receptor alpha (ESR1). Mediates deubiquitination of 'Lys-48'-linked polyubiquitin chains, but not 'Lys-63'-linked polyubiquitin chains. Not able to cleave di-ubiquitin. Also capable of removing NEDD8 from NEDD8 conjugates, but with a much lower preference compared to 'Lys-48'-linked ubiquitin. Functionally, plays a key non-catalytic role in DNA repair regulation by inhibiting activity of RNF168, an E3 ubiquitin-protein ligase that promotes accumulation of 'Lys-63'-linked histone H2A and H2AX at DNA damage sites. Inhibits RNF168 independently of ubiquitin thioesterase activity by binding and inhibiting UBE2N/UBC13, the E2 partner of RNF168, thereby limiting spreading of 'Lys-63'-linked histone H2A and H2AX marks. Inhibition occurs by binding to free ubiquitin: free ubiquitin acts as an allosteric regulator that increases affinity for UBE2N/UBC13 and disrupts interaction with UBE2V1. The OTUB1-UBE2N/UBC13-free ubiquitin complex adopts a configuration that mimics a cleaved 'Lys48'-linked di-ubiquitin chain. Acts as a regulator of mTORC1 and mTORC2 complexes. When phosphorylated at Tyr-26, acts as an activator of the mTORC1 complex by mediating deubiquitination of RPTOR via a non-catalytic process: acts by binding and inhibiting the activity of the ubiquitin-conjugating enzyme E2 (UBE2D1/UBCH5A, UBE2W/UBC16 and UBE2N/UBC13), thereby preventing ubiquitination of RPTOR. Can also act as an inhibitor of the mTORC1 and mTORC2 complexes in response to amino acids by mediating non-catalytic deubiquitination of DEPTOR. The protein is Ubiquitin thioesterase OTUB1 (Otub1) of Mus musculus (Mouse).